The primary structure comprises 261 residues: Cytochrome c oxidase subunit 3 (261 aa).

Residues 1–15 are Mitochondrial matrix-facing; sequence MTHQTHAYHMVNPSP. The chain crosses the membrane as a helical span at residues 16–34; sequence WPLTGALSALLMTSGLIMW. Over 35 to 40 the chain is Mitochondrial intermembrane; it reads FHFNST. Residues 41-66 traverse the membrane as a helical segment; the sequence is TLLMLGLTTNMLTMYQWWRDVVREST. The Mitochondrial matrix segment spans residues 67-72; the sequence is FQGHHT. The chain crosses the membrane as a helical span at residues 73-105; that stretch reads PNVQKGLRYGMILFIISEVLFFTGFFWAFYHSS. Residues 106–128 lie on the Mitochondrial intermembrane side of the membrane; sequence LAPTPELGGCWPPTGINPLNPLE. The chain crosses the membrane as a helical span at residues 129–152; it reads VPLLNTSVLLASGVSITWAHHSLM. Over 153-155 the chain is Mitochondrial matrix; the sequence is EGN. A helical transmembrane segment spans residues 156 to 183; sequence RNHMLQALFITIALGVYFTLLQASEYYE. Residues 184-190 are Mitochondrial intermembrane-facing; the sequence is APFTISD. A helical membrane pass occupies residues 191-223; it reads GVYGSTFFVATGFHGLHVIIGSTFLIVCFFRQL. At 224-232 the chain is on the mitochondrial matrix side; that stretch reads KFHFTSNHH. Residues 233–256 traverse the membrane as a helical segment; it reads FGFEAAAWYWHFVDVVWLFLYVSI. The Mitochondrial intermembrane portion of the chain corresponds to 257–261; that stretch reads YWWGS.

It belongs to the cytochrome c oxidase subunit 3 family. Component of the cytochrome c oxidase (complex IV, CIV), a multisubunit enzyme composed of 14 subunits. The complex is composed of a catalytic core of 3 subunits MT-CO1, MT-CO2 and MT-CO3, encoded in the mitochondrial DNA, and 11 supernumerary subunits COX4I, COX5A, COX5B, COX6A, COX6B, COX6C, COX7A, COX7B, COX7C, COX8 and NDUFA4, which are encoded in the nuclear genome. The complex exists as a monomer or a dimer and forms supercomplexes (SCs) in the inner mitochondrial membrane with NADH-ubiquinone oxidoreductase (complex I, CI) and ubiquinol-cytochrome c oxidoreductase (cytochrome b-c1 complex, complex III, CIII), resulting in different assemblies (supercomplex SCI(1)III(2)IV(1) and megacomplex MCI(2)III(2)IV(2)).

The protein localises to the mitochondrion inner membrane. The enzyme catalyses 4 Fe(II)-[cytochrome c] + O2 + 8 H(+)(in) = 4 Fe(III)-[cytochrome c] + 2 H2O + 4 H(+)(out). Functionally, component of the cytochrome c oxidase, the last enzyme in the mitochondrial electron transport chain which drives oxidative phosphorylation. The respiratory chain contains 3 multisubunit complexes succinate dehydrogenase (complex II, CII), ubiquinol-cytochrome c oxidoreductase (cytochrome b-c1 complex, complex III, CIII) and cytochrome c oxidase (complex IV, CIV), that cooperate to transfer electrons derived from NADH and succinate to molecular oxygen, creating an electrochemical gradient over the inner membrane that drives transmembrane transport and the ATP synthase. Cytochrome c oxidase is the component of the respiratory chain that catalyzes the reduction of oxygen to water. Electrons originating from reduced cytochrome c in the intermembrane space (IMS) are transferred via the dinuclear copper A center (CU(A)) of subunit 2 and heme A of subunit 1 to the active site in subunit 1, a binuclear center (BNC) formed by heme A3 and copper B (CU(B)). The BNC reduces molecular oxygen to 2 water molecules using 4 electrons from cytochrome c in the IMS and 4 protons from the mitochondrial matrix. This is Cytochrome c oxidase subunit 3 (MT-CO3) from Gazella leptoceros (Sand gazelle).